A 258-amino-acid polypeptide reads, in one-letter code: MVLIRVLANLLILQLSYAQKSSELVVGGDECNINEHRSLVAIFNSTEFFCSGTLINQEWVVTAAHCDSTNFKMKLGVHSKKVPNEDEQTRNPKEKFFCPNKKKDDVLDKDIMLIKLDSPVSNSEHIAPLSLPSSPPSVGSVCHIMGWGSITPIEKTLPDVPYCANIKLLDDAVCQPPYPELPATSRTLCAGIPEGGKDTCGGDSGGPLICNGQFQGIVFYGAHPCGQALKPGVYTKVFDYNDWIQSIIAGNTAATCPP.

The signal sequence occupies residues 1-18 (MVLIRVLANLLILQLSYA). Residues 19-24 (QKSSEL) constitute a propeptide that is removed on maturation. The region spanning 25–249 (VVGGDECNIN…YNDWIQSIIA (225 aa)) is the Peptidase S1 domain. 6 disulfide bridges follow: Cys-31-Cys-163, Cys-50-Cys-66, Cys-98-Cys-256, Cys-142-Cys-210, Cys-174-Cys-189, and Cys-200-Cys-225. The N-linked (GlcNAc...) asparagine glycan is linked to Asn-44. Active-site charge relay system residues include His-65 and Asp-110. Ser-204 (charge relay system) is an active-site residue.

The protein belongs to the peptidase S1 family. Snake venom subfamily. As to quaternary structure, monomer. As to expression, expressed by the venom gland.

Its subcellular location is the secreted. In terms of biological role, snake venom serine protease that may act in the hemostasis system of the prey. The polypeptide is Snake venom serine protease catroxase-2 (Crotalus atrox (Western diamondback rattlesnake)).